The sequence spans 265 residues: tRNA pseudouridine synthase A (265 aa).

The Nucleophile role is filled by aspartate 52. Tyrosine 112 is a substrate binding site.

The protein belongs to the tRNA pseudouridine synthase TruA family. In terms of assembly, homodimer.

The catalysed reaction is uridine(38/39/40) in tRNA = pseudouridine(38/39/40) in tRNA. Functionally, formation of pseudouridine at positions 38, 39 and 40 in the anticodon stem and loop of transfer RNAs. This Akkermansia muciniphila (strain ATCC BAA-835 / DSM 22959 / JCM 33894 / BCRC 81048 / CCUG 64013 / CIP 107961 / Muc) protein is tRNA pseudouridine synthase A.